Reading from the N-terminus, the 275-residue chain is NH(3)-dependent NAD(+) synthetase (275 aa).

ATP is bound at residue 46 to 53 (GISGGQDS). Residue D52 participates in Mg(2+) binding. R140 contributes to the deamido-NAD(+) binding site. Residue T160 coordinates ATP. E165 contacts Mg(2+). Deamido-NAD(+) is bound by residues K173 and D180. Positions 189 and 211 each coordinate ATP. 260 to 261 (HK) serves as a coordination point for deamido-NAD(+).

Belongs to the NAD synthetase family. Homodimer.

The catalysed reaction is deamido-NAD(+) + NH4(+) + ATP = AMP + diphosphate + NAD(+) + H(+). It functions in the pathway cofactor biosynthesis; NAD(+) biosynthesis; NAD(+) from deamido-NAD(+) (ammonia route): step 1/1. Functionally, catalyzes the ATP-dependent amidation of deamido-NAD to form NAD. Uses ammonia as a nitrogen source. The chain is NH(3)-dependent NAD(+) synthetase from Escherichia coli O157:H7.